A 391-amino-acid chain; its full sequence is Elongation factor Tu 1 (391 aa).

The tr-type G domain occupies 10–201; the sequence is KLHVNIGTIG…EVDRYIPTPE (192 aa). A G1 region spans residues 19–26; it reads GHVDHGKT. 19 to 26 serves as a coordination point for GTP; that stretch reads GHVDHGKT. Mg(2+) is bound at residue Thr-26. Positions 55-59 are G2; that stretch reads GITIS. Residues 76 to 79 form a G3 region; the sequence is DCPG. Residues 76–80 and 131–134 contribute to the GTP site; these read DCPGH and NKVD. The interval 131–134 is G4; sequence NKVD. Residues 169–171 are G5; it reads SAL.

It belongs to the TRAFAC class translation factor GTPase superfamily. Classic translation factor GTPase family. EF-Tu/EF-1A subfamily. As to quaternary structure, monomer.

The protein resides in the cytoplasm. The enzyme catalyses GTP + H2O = GDP + phosphate + H(+). Functionally, GTP hydrolase that promotes the GTP-dependent binding of aminoacyl-tRNA to the A-site of ribosomes during protein biosynthesis. The chain is Elongation factor Tu 1 from Bartonella bacilliformis (strain ATCC 35685 / KC583 / Herrer 020/F12,63).